We begin with the raw amino-acid sequence, 688 residues long: Glycine--tRNA ligase beta subunit (688 aa).

This sequence belongs to the class-II aminoacyl-tRNA synthetase family. In terms of assembly, tetramer of two alpha and two beta subunits.

Its subcellular location is the cytoplasm. It carries out the reaction tRNA(Gly) + glycine + ATP = glycyl-tRNA(Gly) + AMP + diphosphate. The sequence is that of Glycine--tRNA ligase beta subunit from Shewanella sp. (strain ANA-3).